We begin with the raw amino-acid sequence, 355 residues long: MKQVCVLGNGQLGRMLRQAGEPLGIAVWPVGLDAEPAAVPFQQSVITAEIERWPETALTRELARHPAFVNRDVFPIIADRLTQKQLFDKLHLPTAPWQLLAERSEWPAVFDRLGELAIVKRRTGGYDGRGQWRLRANETEQLPAECYGECIVEQGINFSGEVSLVGARGFDGSTVFYPLTHNLHQDGILRTSVAFPQANAQQQAQAEEMLSAIMQELGYVGVMAMECFVTPQGLLINELAPRVHNSGHWTQNGASISQFELHLRAITDLPLPQPVVNNPSVMINLIGSDVNYDWLKLPLVHLHWYDKEVRPGRKVGHLNLTDSDTSRLTATLEALIPLLPPEYASGVIWAQSKFG.

Residues R80, K120, 125-131, 153-156, E161, H184, and 237-238 contribute to the ATP site; these read GYDGRGQ, EQGI, and NE. One can recognise an ATP-grasp domain in the interval 84–267; the sequence is KQLFDKLHLP…QFELHLRAIT (184 aa).

The protein belongs to the PurK/PurT family. As to quaternary structure, homodimer.

It carries out the reaction 5-amino-1-(5-phospho-beta-D-ribosyl)imidazole + hydrogencarbonate + ATP = 5-carboxyamino-1-(5-phospho-D-ribosyl)imidazole + ADP + phosphate + 2 H(+). Its pathway is purine metabolism; IMP biosynthesis via de novo pathway; 5-amino-1-(5-phospho-D-ribosyl)imidazole-4-carboxylate from 5-amino-1-(5-phospho-D-ribosyl)imidazole (N5-CAIR route): step 1/2. In terms of biological role, catalyzes the ATP-dependent conversion of 5-aminoimidazole ribonucleotide (AIR) and HCO(3)(-) to N5-carboxyaminoimidazole ribonucleotide (N5-CAIR). In Escherichia coli (strain K12), this protein is N5-carboxyaminoimidazole ribonucleotide synthase.